Here is a 355-residue protein sequence, read N- to C-terminus: S-adenosylmethionine:tRNA ribosyltransferase-isomerase (355 aa).

Belongs to the QueA family. As to quaternary structure, monomer.

It localises to the cytoplasm. It catalyses the reaction 7-aminomethyl-7-carbaguanosine(34) in tRNA + S-adenosyl-L-methionine = epoxyqueuosine(34) in tRNA + adenine + L-methionine + 2 H(+). The protein operates within tRNA modification; tRNA-queuosine biosynthesis. Transfers and isomerizes the ribose moiety from AdoMet to the 7-aminomethyl group of 7-deazaguanine (preQ1-tRNA) to give epoxyqueuosine (oQ-tRNA). This Burkholderia ambifaria (strain MC40-6) protein is S-adenosylmethionine:tRNA ribosyltransferase-isomerase.